Consider the following 101-residue polypeptide: MSEKSVEAAAELSAKDLKEKKDKVEEKAGRKERKKEVVEEEENGAEEEEEETAEDGEDDDEGDEEDEEEEEEDEGPVRKRTAEEEDEADPKRQKTENGASA.

Residues Met-1–Ala-101 form a disordered region. At Ser-2 the chain carries N-acetylserine. Phosphoserine is present on Ser-2. Lys-4 is subject to N6-acetyllysine. Residues Ser-5 and Ser-13 each carry the phosphoserine modification. Residues Ser-13–Val-37 are compositionally biased toward basic and acidic residues. An N6-acetyllysine modification is found at Lys-15. The segment covering Val-38 to Glu-74 has biased composition (acidic residues). Thr-52 is modified (phosphothreonine). Lys-91 carries the post-translational modification N6-acetyllysine.

This sequence belongs to the pro/parathymosin family.

Its function is as follows. Parathymosin may mediate immune function by blocking the effect of prothymosin alpha which confers resistance to certain opportunistic infections. The chain is Parathymosin (Ptms) from Mus musculus (Mouse).